A 540-amino-acid polypeptide reads, in one-letter code: Fumonisin B1 esterase (540 aa).

The Acyl-ester intermediate role is filled by Ser240. Active-site charge relay system residues include Glu356 and His448. The segment at 521–540 (QVGSGEGLGVSPSKACQPSK) is disordered.

Belongs to the type-B carboxylesterase/lipase family.

It carries out the reaction fumonisin B1 + 2 H2O = 2 tricarballylate + (2S,3S,5R,10R,12S,14S,15R,16R)-2-amino-12,16-dimethylicosane-3,5,10,14,15-pentol + 2 H(+). Its function is as follows. Involved in degradation of fumonisin B1. Catalyzes the hydrolysis of fumonisin B1 (FB1) to aminopentol (HFB1). The protein is Fumonisin B1 esterase (fumD) of Sphingopyxis macrogoltabida (Sphingomonas macrogoltabidus).